Reading from the N-terminus, the 214-residue chain is MKPPALTPRLLLRAYALGIFPMAESRDDPEIHWIDPRHRGIFPLDGFHISRSLARRIRRMDWRVSVDEDFAATVEACADREETWINPTIFRLYVELHALGHAHSLEVREGETLVGGVYGVTLGRAFFGESMFSHRTDASKVALAFLIDRLRAGGFTLFDTQFLTPHLASLGAIEIRRSDYHQRLTVALEGNASFTPEGYWADPASVVQRNSQTS.

This sequence belongs to the L/F-transferase family.

Its subcellular location is the cytoplasm. It catalyses the reaction N-terminal L-lysyl-[protein] + L-leucyl-tRNA(Leu) = N-terminal L-leucyl-L-lysyl-[protein] + tRNA(Leu) + H(+). It carries out the reaction N-terminal L-arginyl-[protein] + L-leucyl-tRNA(Leu) = N-terminal L-leucyl-L-arginyl-[protein] + tRNA(Leu) + H(+). The catalysed reaction is L-phenylalanyl-tRNA(Phe) + an N-terminal L-alpha-aminoacyl-[protein] = an N-terminal L-phenylalanyl-L-alpha-aminoacyl-[protein] + tRNA(Phe). In terms of biological role, functions in the N-end rule pathway of protein degradation where it conjugates Leu, Phe and, less efficiently, Met from aminoacyl-tRNAs to the N-termini of proteins containing an N-terminal arginine or lysine. This chain is Leucyl/phenylalanyl-tRNA--protein transferase, found in Cereibacter sphaeroides (strain ATCC 17029 / ATH 2.4.9) (Rhodobacter sphaeroides).